The primary structure comprises 593 residues: Aspartate--tRNA ligase (593 aa).

Glutamate 180 contacts L-aspartate. The tract at residues 204–207 (QIFK) is aspartate. Arginine 226 is a binding site for L-aspartate. ATP contacts are provided by residues 226 to 228 (RDE) and glutamine 235. Histidine 453 serves as a coordination point for L-aspartate. Glutamate 487 is a binding site for ATP. Arginine 494 is an L-aspartate binding site. An ATP-binding site is contributed by 539–542 (GLDR).

This sequence belongs to the class-II aminoacyl-tRNA synthetase family. Type 1 subfamily. In terms of assembly, homodimer.

The protein localises to the cytoplasm. The enzyme catalyses tRNA(Asp) + L-aspartate + ATP = L-aspartyl-tRNA(Asp) + AMP + diphosphate. Functionally, catalyzes the attachment of L-aspartate to tRNA(Asp) in a two-step reaction: L-aspartate is first activated by ATP to form Asp-AMP and then transferred to the acceptor end of tRNA(Asp). In Clostridium botulinum (strain Loch Maree / Type A3), this protein is Aspartate--tRNA ligase.